Consider the following 237-residue polypeptide: MAYARVLLKLSGEALMGDQSYGIDPAIVQSIAEDVAKVVAKGTQLAIVVGGGNIFRGLKGSAAGMDRATADYVGMLATVMNAITLQDGLERAGVATRVQTAIEMQEVAEPYIRRRAIRHLEKGRVVVFGGGCGNPFFTTDTTASLRAAEINADVVFKATKVDGVYDRDPKRFPDAKRYDSLTFQQVLSGELAVMDSTAIALCKDNNIPIVVFDLFEPGNIGKAVAGEAIGSRISNAT.

Lys9–Gly12 is a binding site for ATP. UMP is bound at residue Gly51. The ATP site is built by Gly52 and Arg56. UMP contacts are provided by residues Asp71 and Cys132–Thr139. Positions 159, 165, and 168 each coordinate ATP.

This sequence belongs to the UMP kinase family. In terms of assembly, homohexamer.

It is found in the cytoplasm. It catalyses the reaction UMP + ATP = UDP + ADP. The protein operates within pyrimidine metabolism; CTP biosynthesis via de novo pathway; UDP from UMP (UMPK route): step 1/1. With respect to regulation, inhibited by UTP. Functionally, catalyzes the reversible phosphorylation of UMP to UDP. This is Uridylate kinase from Prochlorococcus marinus (strain MIT 9303).